We begin with the raw amino-acid sequence, 292 residues long: Phosphatidylglycerol--prolipoprotein diacylglyceryl transferase (292 aa).

The next 7 membrane-spanning stretches (helical) occupy residues 25-45, 70-90, 102-122, 138-158, 193-213, 217-237, and 255-275; these read ITLHWYGLGYVVGILFAWWYA, FVVWSAISVVVGGRLGQVLVW, IIAVWDGGMSFHGGLIGIIIA, FDIIAAGAPIGIGIVRICNFI, FMEGFILFMILFIVIFTFKAF, GTVSGIFIIGYAIARSISEVY, and GFTYGMALSLPMLLLGFYLLL. Arg-153 provides a ligand contact to a 1,2-diacyl-sn-glycero-3-phospho-(1'-sn-glycerol).

This sequence belongs to the Lgt family.

The protein localises to the cell inner membrane. The enzyme catalyses L-cysteinyl-[prolipoprotein] + a 1,2-diacyl-sn-glycero-3-phospho-(1'-sn-glycerol) = an S-1,2-diacyl-sn-glyceryl-L-cysteinyl-[prolipoprotein] + sn-glycerol 1-phosphate + H(+). Its pathway is protein modification; lipoprotein biosynthesis (diacylglyceryl transfer). Functionally, catalyzes the transfer of the diacylglyceryl group from phosphatidylglycerol to the sulfhydryl group of the N-terminal cysteine of a prolipoprotein, the first step in the formation of mature lipoproteins. This is Phosphatidylglycerol--prolipoprotein diacylglyceryl transferase from Bartonella tribocorum (strain CIP 105476 / IBS 506).